The primary structure comprises 192 residues: Probable chorismate pyruvate-lyase (192 aa).

The substrate site is built by Arg-85, Leu-120, and Glu-176.

Belongs to the UbiC family.

The protein localises to the cytoplasm. The catalysed reaction is chorismate = 4-hydroxybenzoate + pyruvate. It functions in the pathway cofactor biosynthesis; ubiquinone biosynthesis. Functionally, removes the pyruvyl group from chorismate, with concomitant aromatization of the ring, to provide 4-hydroxybenzoate (4HB) for the ubiquinone pathway. The sequence is that of Probable chorismate pyruvate-lyase from Pseudoalteromonas atlantica (strain T6c / ATCC BAA-1087).